The chain runs to 95 residues: Co-chaperonin GroES (95 aa).

Belongs to the GroES chaperonin family. As to quaternary structure, heptamer of 7 subunits arranged in a ring. Interacts with the chaperonin GroEL.

It is found in the cytoplasm. Functionally, together with the chaperonin GroEL, plays an essential role in assisting protein folding. The GroEL-GroES system forms a nano-cage that allows encapsulation of the non-native substrate proteins and provides a physical environment optimized to promote and accelerate protein folding. GroES binds to the apical surface of the GroEL ring, thereby capping the opening of the GroEL channel. This is Co-chaperonin GroES from Jannaschia sp. (strain CCS1).